We begin with the raw amino-acid sequence, 346 residues long: uncharacterized protein (346 aa).

The interval 321–346 (TPWGTHSVAGVGPPPYARSGPASATT) is disordered.

This is an uncharacterized protein from Mycobacterium tuberculosis (strain CDC 1551 / Oshkosh).